The sequence spans 289 residues: MTAQLIDGNALAKQLRAEAAQRAAALTARGHQPGLAVILVGEDPASQVYVRNKIKACEDNGFLSSFDRYPADLSEADLLGRIDALNRDPRIHGILVQLPLPKHIDSHKVLEAIAPEKDVDGFHVANAGALMTGAPLFRPCTPYGCMKMLESINYPVRGANAVVVGASNIVGKPMAMLLLQSGATITICNSKTRDLAAHTREADIIVAAVGRRNIITADMVKPGAVVIDVGMNRDDAGKLCGDVDFAGVKEVAGYITPVPGGVGPMTITMLLINTLEAAERAAEGAALAA.

NADP(+) is bound by residues 165 to 167 (GAS) and serine 190.

The protein belongs to the tetrahydrofolate dehydrogenase/cyclohydrolase family. As to quaternary structure, homodimer.

It catalyses the reaction (6R)-5,10-methylene-5,6,7,8-tetrahydrofolate + NADP(+) = (6R)-5,10-methenyltetrahydrofolate + NADPH. The catalysed reaction is (6R)-5,10-methenyltetrahydrofolate + H2O = (6R)-10-formyltetrahydrofolate + H(+). It functions in the pathway one-carbon metabolism; tetrahydrofolate interconversion. Its function is as follows. Catalyzes the oxidation of 5,10-methylenetetrahydrofolate to 5,10-methenyltetrahydrofolate and then the hydrolysis of 5,10-methenyltetrahydrofolate to 10-formyltetrahydrofolate. The sequence is that of Bifunctional protein FolD from Ralstonia pickettii (strain 12J).